A 90-amino-acid polypeptide reads, in one-letter code: Probable Fe(2+)-trafficking protein (90 aa).

It belongs to the Fe(2+)-trafficking protein family.

Functionally, could be a mediator in iron transactions between iron acquisition and iron-requiring processes, such as synthesis and/or repair of Fe-S clusters in biosynthetic enzymes. In Haemophilus influenzae (strain 86-028NP), this protein is Probable Fe(2+)-trafficking protein.